Reading from the N-terminus, the 113-residue chain is Ribosome-binding factor A (113 aa).

This sequence belongs to the RbfA family. Monomer. Binds 30S ribosomal subunits, but not 50S ribosomal subunits or 70S ribosomes.

It is found in the cytoplasm. Its function is as follows. One of several proteins that assist in the late maturation steps of the functional core of the 30S ribosomal subunit. Associates with free 30S ribosomal subunits (but not with 30S subunits that are part of 70S ribosomes or polysomes). Required for efficient processing of 16S rRNA. May interact with the 5'-terminal helix region of 16S rRNA. This is Ribosome-binding factor A from Oceanobacillus iheyensis (strain DSM 14371 / CIP 107618 / JCM 11309 / KCTC 3954 / HTE831).